A 428-amino-acid polypeptide reads, in one-letter code: AP-1 complex subunit mu (428 aa).

An N-acetylalanine; partial modification is found at alanine 2. One can recognise an MHD domain in the interval 169-426; the sequence is KNEVFLDVVE…VCLSGDYQFR (258 aa).

Belongs to the adaptor complexes medium subunit family. Adaptor protein complex 1 (AP-1) is a heterotetramer composed of two large adaptins (gamma-type subunit and beta-type subunit), a medium adaptin (mu-type subunit) and a small adaptin (sigma-type subunit).

It is found in the golgi apparatus. It localises to the trans-Golgi network. The protein resides in the cytoplasmic vesicle. The protein localises to the clathrin-coated vesicle membrane. Subunit of clathrin-associated adaptor protein complex 1 that plays a role in protein sorting in the trans-Golgi network (TGN) and endosomes. The AP complexes mediate the recruitment of clathrin to membranes and the recognition of sorting signals within the cytosolic tails of transmembrane cargo molecules. Also involved in early steps of phagocytosis and macropinocytosis. This chain is AP-1 complex subunit mu (apm1), found in Dictyostelium discoideum (Social amoeba).